A 125-amino-acid polypeptide reads, in one-letter code: Ribonuclease P protein component (125 aa).

The protein belongs to the RnpA family. As to quaternary structure, consists of a catalytic RNA component (M1 or rnpB) and a protein subunit.

It catalyses the reaction Endonucleolytic cleavage of RNA, removing 5'-extranucleotides from tRNA precursor.. Its function is as follows. RNaseP catalyzes the removal of the 5'-leader sequence from pre-tRNA to produce the mature 5'-terminus. It can also cleave other RNA substrates such as 4.5S RNA. The protein component plays an auxiliary but essential role in vivo by binding to the 5'-leader sequence and broadening the substrate specificity of the ribozyme. The sequence is that of Ribonuclease P protein component from Ruegeria pomeroyi (strain ATCC 700808 / DSM 15171 / DSS-3) (Silicibacter pomeroyi).